A 199-amino-acid chain; its full sequence is N-(5'-phosphoribosyl)anthranilate isomerase (199 aa).

The protein belongs to the TrpF family.

The catalysed reaction is N-(5-phospho-beta-D-ribosyl)anthranilate = 1-(2-carboxyphenylamino)-1-deoxy-D-ribulose 5-phosphate. Its pathway is amino-acid biosynthesis; L-tryptophan biosynthesis; L-tryptophan from chorismate: step 3/5. In Streptococcus pneumoniae (strain ATCC 700669 / Spain 23F-1), this protein is N-(5'-phosphoribosyl)anthranilate isomerase.